The following is a 132-amino-acid chain: ATP synthase epsilon chain, chloroplastic (132 aa).

This sequence belongs to the ATPase epsilon chain family. F-type ATPases have 2 components, CF(1) - the catalytic core - and CF(0) - the membrane proton channel. CF(1) has five subunits: alpha(3), beta(3), gamma(1), delta(1), epsilon(1). CF(0) has three main subunits: a, b and c.

The protein resides in the plastid. Its subcellular location is the chloroplast thylakoid membrane. Its function is as follows. Produces ATP from ADP in the presence of a proton gradient across the membrane. This Coffea arabica (Arabian coffee) protein is ATP synthase epsilon chain, chloroplastic.